We begin with the raw amino-acid sequence, 57 residues long: Lantibiotic nisin-Z (57 aa).

Residues 1–23 (MSTKDFNLDLVSVSKKDSGASPR) constitute a propeptide that is removed on maturation. Threonine 25 is modified (2,3-didehydrobutyrine). A cross-link (lanthionine (Ser-Cys)) is located at residues 26 to 30 (SISLC). The residue at position 28 (serine 28) is a 2,3-didehydroalanine (Ser). 4 cross-links (beta-methyllanthionine (Thr-Cys)) span residues 31–34 (TPGC), 36–42 (TGALMGC), 46–49 (TATC), and 48–51 (TCNC). At serine 56 the chain carries 2,3-didehydroalanine (Ser).

The protein belongs to the type A lantibiotic family. Maturation of lantibiotics involves the enzymatic conversion of Thr, and Ser into dehydrated AA and the formation of thioether bonds with cysteine. This is followed by membrane translocation and cleavage of the modified precursor. In terms of processing, the structure of the 2,3-didehydrobutyrine is not discussed in PubMed:15361862. It is probably the Z-isomer by similarity.

In terms of biological role, lanthionine-containing peptide antibiotic (lantibiotic) active on Gram-positive bacteria. The bactericidal activity of lantibiotics is based on depolarization of energized bacterial cytoplasmic membranes, initiated by the formation of aqueous transmembrane pores. The sequence is that of Lantibiotic nisin-Z (nisZ) from Lactococcus lactis subsp. lactis (Streptococcus lactis).